The chain runs to 44 residues: Tachystatin-A1 (44 aa).

Disulfide bonds link cysteine 4/cysteine 24, cysteine 11/cysteine 29, and cysteine 23/cysteine 41.

In terms of tissue distribution, granular hemocytes, small secretory granules.

The protein localises to the secreted. Functionally, exhibits stronger antimicrobial activity against the Gram-positive bacteria (S.aureus (IC(50) is 4.2 ug/ml)) and fungi (C.albicans (IC(50) is 3.0 ug/ml) and P.pastoris (IC(50) is 0.5 ug/ml)) than Gram-negative bacteria (E.coli (IC(50) is 25 ug/ml)). Binds to chitin (8.4 uM are required to obtain 50% of binding). Does not cause hemolysis on sheep erythrocytes. Has no blocking activity on the P-type calcium channel. The chain is Tachystatin-A1 from Tachypleus tridentatus (Japanese horseshoe crab).